A 643-amino-acid chain; its full sequence is Very long-chain fatty acid transport protein (643 aa).

Residues 1 to 15 (MACMHQAQLYNDLEE) are Cytoplasmic-facing. Residues 16–36 (LLTGPSVPIVAGAAGAAALTA) traverse the membrane as a helical segment. Residues 37–138 (YINAKYHIAH…AIDGGNSAEH (102 aa)) are Extracellular-facing. A helical transmembrane segment spans residues 139-159 (LMLWLALDAIGAATSFLNWNL). Over 160 to 249 (TGAGLIHCIK…TGLPKGVFIS (90 aa)) the chain is Cytoplasmic. Position 235-246 (235-246 (YTSGTTGLPKGV)) interacts with ATP. Residues 250 to 318 (TGRELRTDWS…FWPEVVASEA (69 aa)) lie within the membrane without spanning it. Topologically, residues 319–643 (NIIQYVGELG…QGIVDKRIRL (325 aa)) are cytoplasmic. Positions 477–525 (DLWFKSGDMLRQDAEGRVYFVDRLGDTFRWKSENVSTNEVADVMGTFPQ) match the FACS motif.

Belongs to the ATP-dependent AMP-binding enzyme family.

The protein localises to the lipid droplet. The protein resides in the cell membrane. It localises to the peroxisome membrane. Its subcellular location is the peroxisome. The catalysed reaction is a very long-chain fatty acid + ATP + CoA = a very long-chain fatty acyl-CoA + AMP + diphosphate. Acyl-CoA synthetase required for both the import of long chain fatty acids (LCFAs) (C14-C18) and the activation very long chain fatty acids (VLCFAs) (C20-C26) by esterification of the fatty acids into metabolically active CoA-thioesters for subsequent degradation or incorporation into phospholipids. The transport and fatty acyl-CoA synthetase activities are genetically separable and are thus independent activities. Esterifies VLCFAs in the peroxisome matrix. The VLCFAs are actively transported into peroxisomes by a PXA1-PXA2 heterodimeric transporter in the peroxisomal membrane. The sequence is that of Very long-chain fatty acid transport protein (FAT1) from Cochliobolus heterostrophus (Southern corn leaf blight fungus).